The chain runs to 227 residues: Ras-related protein Rab-3C (227 aa).

Positions 39, 42, 43, 44, 45, 56, 57, 61, and 62 each coordinate GTP. A Mg(2+)-binding site is contributed by Thr44. Positions 53–66 (DSFTSAFVSTVGID) match the Switch 1 motif. Residues Thr62 and Asp85 each contribute to the Mg(2+) site. At Thr86 the chain carries Phosphothreonine; by LRRK2. Residues 86–104 (TAGQERYRTITTAYYRGAM) carry the Switch 2 motif. Residues Gly88, Asn143, Lys144, Asp146, Ala174, and Lys175 each coordinate GTP. Phosphoserine occurs at positions 196 and 198. The tract at residues 202-227 (DPAITAAKQSTRLKETPPPPQPNCGC) is disordered. Phosphothreonine is present on Thr206. A compositionally biased stretch (pro residues) spans 217 to 227 (TPPPPQPNCGC). S-geranylgeranyl cysteine attachment occurs at residues Cys225 and Cys227. Cys227 is subject to Cysteine methyl ester.

It belongs to the small GTPase superfamily. Rab family. Interacts with RIMS1, RIMS2, RPH3A and RPH3AL. Interacts with GDI2, CHM and CHML; phosphorylation at Thr-86 disrupts these interactions. Interacts with MADD (via uDENN domain); the GTP-bound form is preferred for interaction. Mg(2+) is required as a cofactor. In terms of processing, phosphorylation of Thr-86 in the switch II region by LRRK2 prevents the association of RAB regulatory proteins, including CHM, CHML and RAB GDP dissociation inhibitor GDI2.

Its subcellular location is the cell membrane. It carries out the reaction GTP + H2O = GDP + phosphate + H(+). Its activity is regulated as follows. Regulated by guanine nucleotide exchange factors (GEFs) which promote the exchange of bound GDP for free GTP. Regulated by GTPase activating proteins (GAPs) which increase the GTP hydrolysis activity. Inhibited by GDP dissociation inhibitors (GDIs) which prevent Rab-GDP dissociation. In terms of biological role, the small GTPases Rab are key regulators of intracellular membrane trafficking, from the formation of transport vesicles to their fusion with membranes. Rabs cycle between an inactive GDP-bound form and an active GTP-bound form that is able to recruit to membranes different sets of downstream effectors directly responsible for vesicle formation, movement, tethering and fusion. This is Ras-related protein Rab-3C from Mus musculus (Mouse).